The following is a 174-amino-acid chain: Secretion monitor (174 aa).

A signal peptide spans 1–35 (MGILNLWRQFGRRYFWSHLLLGVVAASIGAPTILA).

Belongs to the SecM family.

The protein resides in the cytoplasm. Its subcellular location is the cytosol. The protein localises to the periplasm. Functionally, regulates secA expression by translational coupling of the secM secA operon. Translational pausing at a specific Pro residue 5 residues before the end of the protein may allow disruption of a mRNA repressor helix that normally suppresses secA translation initiation. The polypeptide is Secretion monitor (Photorhabdus laumondii subsp. laumondii (strain DSM 15139 / CIP 105565 / TT01) (Photorhabdus luminescens subsp. laumondii)).